The following is a 269-amino-acid chain: 4-hydroxy-tetrahydrodipicolinate reductase (269 aa).

NAD(+) contacts are provided by residues 8–13 and E34; that span reads GAAGRM. Residue R35 participates in NADP(+) binding. NAD(+)-binding positions include 98–100 and 122–125; these read GTT and APNY. H155 functions as the Proton donor/acceptor in the catalytic mechanism. Residue H156 coordinates (S)-2,3,4,5-tetrahydrodipicolinate. K159 (proton donor) is an active-site residue. 165–166 contributes to the (S)-2,3,4,5-tetrahydrodipicolinate binding site; sequence GT.

Belongs to the DapB family.

It is found in the cytoplasm. The enzyme catalyses (S)-2,3,4,5-tetrahydrodipicolinate + NAD(+) + H2O = (2S,4S)-4-hydroxy-2,3,4,5-tetrahydrodipicolinate + NADH + H(+). It carries out the reaction (S)-2,3,4,5-tetrahydrodipicolinate + NADP(+) + H2O = (2S,4S)-4-hydroxy-2,3,4,5-tetrahydrodipicolinate + NADPH + H(+). Its pathway is amino-acid biosynthesis; L-lysine biosynthesis via DAP pathway; (S)-tetrahydrodipicolinate from L-aspartate: step 4/4. In terms of biological role, catalyzes the conversion of 4-hydroxy-tetrahydrodipicolinate (HTPA) to tetrahydrodipicolinate. This is 4-hydroxy-tetrahydrodipicolinate reductase from Vibrio parahaemolyticus serotype O3:K6 (strain RIMD 2210633).